Reading from the N-terminus, the 184-residue chain is GTPase RhebL1 (184 aa).

Residues 16–21 (SVGKTS), 32–38 (LEGYDPT), glycine 63, 119–122 (NKAD), and 149–150 (SA) contribute to the GTP site. Residues 35–43 (YDPTVENTY) carry the Effector region motif. A Mg(2+)-binding site is contributed by threonine 38. Cysteine 181 carries the post-translational modification Cysteine methyl ester. Residue cysteine 181 is the site of S-farnesyl cysteine attachment. The propeptide at 182-184 (YLM) is removed in mature form.

The protein belongs to the small GTPase superfamily. Rheb family. In terms of assembly, interacts with MTOR.

The protein resides in the endomembrane system. It localises to the cytoplasm. It catalyses the reaction GTP + H2O = GDP + phosphate + H(+). Functionally, binds GTP and exhibits intrinsic GTPase activity. May activate NF-kappa-B-mediated gene transcription. Promotes signal transduction through MTOR, activates RPS6KB1, and is a downstream target of the small GTPase-activating proteins TSC1 and TSC2. The protein is GTPase RhebL1 (Rhebl1) of Mus musculus (Mouse).